The primary structure comprises 488 residues: BRAP2 RING ZnF UBP domain-containing protein 1 (488 aa).

Residues 174–214 (CPICLERLDPDTSGIVSTLCDHSFQCSCTSKWTYLSCQVCR) form an RING-type; degenerate zinc finger. A UBP-type; degenerate zinc finger spans residues 208–301 (LSCQVCRLCQ…GKSVEMSTSC (94 aa)). Zn(2+) contacts are provided by cysteine 225, cysteine 228, cysteine 237, cysteine 240, cysteine 245, histidine 252, histidine 256, and histidine 262. Residues 370-418 (EQIVVNTMQELQNKIEKCEEEKSGITEVNTKLIKEQDTWRKKAKEIEER) are a coiled coil. The disordered stretch occupies residues 453-488 (MSSDTDGIREGTVLPVPISPEPVSSVRRQKKSNRRK). Residues 465–478 (VLPVPISPEPVSSV) are compositionally biased toward low complexity. Positions 479-488 (RRQKKSNRRK) are enriched in basic residues.

Component of the heteromeric E3 ligase complex made of BRIZ1 and BRIZ2. Forms heterooligomers with BRIZ2 via coiled-coil domains.

The enzyme catalyses S-ubiquitinyl-[E2 ubiquitin-conjugating enzyme]-L-cysteine + [acceptor protein]-L-lysine = [E2 ubiquitin-conjugating enzyme]-L-cysteine + N(6)-ubiquitinyl-[acceptor protein]-L-lysine.. It participates in protein modification; protein ubiquitination. Its function is as follows. RING-type ubiquitin E3 ligase required for seed germination and post-germination growth. This Arabidopsis thaliana (Mouse-ear cress) protein is BRAP2 RING ZnF UBP domain-containing protein 1.